The primary structure comprises 606 residues: ATP-dependent rRNA helicase SPB4 (606 aa).

The Q motif signature appears at 7-35 (WDNLGFSLLPWIRTGLDVMGFETMTPVQA). The region spanning 38 to 224 (IPMLAGNKDV…KTGLRNPVRI (187 aa)) is the Helicase ATP-binding domain. Position 51-58 (51-58 (SVTGSGKT)) interacts with ATP. A DEAD box motif is present at residues 172 to 175 (DEAD). Residues 248–404 (KLQLLVSILN…ELDLEVKGIT (157 aa)) enclose the Helicase C-terminal domain. Ser-254 bears the Phosphoserine mark. Positions 539–582 (KTLTKERKLERKEKMSLKRKAIEEELKAEELDENAEEERIKEDW) form a coiled coil.

The protein belongs to the DEAD box helicase family. DDX55/SPB4 subfamily. Component of pre-60S ribosomal complexes.

It localises to the nucleus. The protein localises to the nucleolus. The enzyme catalyses ATP + H2O = ADP + phosphate + H(+). ATP-binding RNA helicase involved in the biogenesis of 60S ribosomal subunits. Binds 90S pre-ribosomal particles and dissociates from pre-60S ribosomal particles after processing of 27SB pre-rRNA. Required for the normal formation of 18S rRNA through the processing of pre-rRNAs at sites A0, A1 and A2, and the normal formation of 25S and 5.8S rRNAs through the processing of pre-rRNAs at sites C1 and C2. Also required for recruitment of NOG2 to pre-ribosomes. The sequence is that of ATP-dependent rRNA helicase SPB4 from Saccharomyces cerevisiae (strain ATCC 204508 / S288c) (Baker's yeast).